Consider the following 142-residue polypeptide: Histone H2B (142 aa).

Positions 1-10 (MPPKPAEKKP) are enriched in basic and acidic residues. The tract at residues 1–50 (MPPKPAEKKPSSTAGKAPASSAGKAPAEAAKKTSKAPAKSGEKKKATKVR) is disordered. K8 and K9 each carry N6-acetyllysine; alternate. Residues K8 and K9 each participate in a glycyl lysine isopeptide (Lys-Gly) (interchain with G-Cter in SUMO); alternate cross-link. A compositionally biased stretch (low complexity) spans 11 to 28 (SSTAGKAPASSAGKAPAE). K24 carries the post-translational modification N6-acetyllysine. Basic and acidic residues predominate over residues 40–50 (SGEKKKATKVR). K137 participates in a covalent cross-link: Glycyl lysine isopeptide (Lys-Gly) (interchain with G-Cter in ubiquitin).

It belongs to the histone H2B family. The nucleosome is a histone octamer containing two molecules each of H2A, H2B, H3 and H4 assembled in one H3-H4 heterotetramer and two H2A-H2B heterodimers. The octamer wraps approximately 147 bp of DNA. Post-translationally, monoubiquitinated by the UBC2-BRE1 complex to form H2BK123ub1. H2BK123ub1 gives a specific tag for epigenetic transcriptional activation and is also prerequisite for H3K4me and H3K79me formation. H2BK123ub1 also modulates the formation of double-strand breaks during meiosis and is a prerequisite for DNA-damage checkpoint activation. In terms of processing, acetylation of N-terminal lysines and particularly formation of H2BK11ac has a positive effect on transcription. Sumoylation to form H2BK6su or H2BK7su occurs preferentially near the telomeres and represses gene transcription.

Its subcellular location is the nucleus. The protein resides in the chromosome. Its function is as follows. Core component of nucleosome. Nucleosomes wrap and compact DNA into chromatin, limiting DNA accessibility to the cellular machineries which require DNA as a template. Histones thereby play a central role in transcription regulation, DNA repair, DNA replication and chromosomal stability. DNA accessibility is regulated via a complex set of post-translational modifications of histones, also called histone code, and nucleosome remodeling. In Mycosarcoma maydis (Corn smut fungus), this protein is Histone H2B (HTB1).